A 291-amino-acid chain; its full sequence is 33 kDa chaperonin (291 aa).

2 disulfide bridges follow: Cys229-Cys231 and Cys262-Cys265.

This sequence belongs to the HSP33 family. Post-translationally, under oxidizing conditions two disulfide bonds are formed involving the reactive cysteines. Under reducing conditions zinc is bound to the reactive cysteines and the protein is inactive.

The protein resides in the cytoplasm. In terms of biological role, redox regulated molecular chaperone. Protects both thermally unfolding and oxidatively damaged proteins from irreversible aggregation. Plays an important role in the bacterial defense system toward oxidative stress. The sequence is that of 33 kDa chaperonin from Vibrio cholerae serotype O1 (strain ATCC 39315 / El Tor Inaba N16961).